The chain runs to 833 residues: Leucine--tRNA ligase (833 aa).

The 'HIGH' region motif lies at 41–52 (PYPSGAGLHVGH). The 'KMSKS' region signature appears at 610–614 (KMSKS). Lysine 613 is a binding site for ATP.

Belongs to the class-I aminoacyl-tRNA synthetase family.

It is found in the cytoplasm. It carries out the reaction tRNA(Leu) + L-leucine + ATP = L-leucyl-tRNA(Leu) + AMP + diphosphate. This is Leucine--tRNA ligase from Streptococcus pneumoniae (strain ATCC 700669 / Spain 23F-1).